The following is a 70-amino-acid chain: Large ribosomal subunit protein bL31 (70 aa).

The Zn(2+) site is built by Cys16, Cys18, Cys37, and Cys40.

It belongs to the bacterial ribosomal protein bL31 family. Type A subfamily. Part of the 50S ribosomal subunit. Zn(2+) serves as cofactor.

Functionally, binds the 23S rRNA. The sequence is that of Large ribosomal subunit protein bL31 from Haemophilus influenzae (strain PittEE).